The sequence spans 165 residues: Putative BTB/POZ domain-containing protein At2g40440 (165 aa).

The region spanning Val-24–Ala-98 is the BTB domain.

Its pathway is protein modification; protein ubiquitination. Its function is as follows. May act as a substrate-specific adapter of an E3 ubiquitin-protein ligase complex (CUL3-RBX1-BTB) which mediates the ubiquitination and subsequent proteasomal degradation of target proteins. In Arabidopsis thaliana (Mouse-ear cress), this protein is Putative BTB/POZ domain-containing protein At2g40440.